The following is a 529-amino-acid chain: MSNAPFMQEVARRRTFAIISHPDAGKTTITEKVLLFGQAIQTAGTVKGRGSNQHAKSDWMEMEKQRGISITTSVMQFPYRGSLVNLLDTPGHEDFSEDTYRTLTAVDCCLMVIDAAKGVEDRTRKLMEVTRLRDTPILTFMNKLDRDIRDPMEVMDEVESELKIACAPITWPVGCGKLFKGVYHLYKDETYLYQSGKGHTIQEVRIVKGLGNPELDAAIGDELAAQLRDELELVQGASHEFDRDAFLNGKLSPVFFGTALGNFGVDHMLDGLVEWAPSPMPRNTDLRTVTATDEKFTGFVFKIQANMDPKHRDRVAFMRVVSGKYEKGMKLRQVRTGKDVVIADALTFMAGDRSHVEEAYPGDIIGLHNHGTIQIGDTFTQGENMKFTGIPNFAPELFRRIRLRDPLKQKQLLKGLVQLSEEGAVQVFRPVHNNDLIVGAVGVLQFDVVVARLKSEYNVEAIYEAINVSTARWVECDDVKKFDEFQRKNEINLALDGGDNLTYIAPTMVNLNITQERYPDVVFRKTREH.

The tr-type G domain occupies 11-280 (ARRRTFAIIS…GLVEWAPSPM (270 aa)). GTP contacts are provided by residues 20 to 27 (SHPDAGKT), 88 to 92 (DTPGH), and 142 to 145 (NKLD).

Belongs to the TRAFAC class translation factor GTPase superfamily. Classic translation factor GTPase family. PrfC subfamily.

The protein resides in the cytoplasm. In terms of biological role, increases the formation of ribosomal termination complexes and stimulates activities of RF-1 and RF-2. It binds guanine nucleotides and has strong preference for UGA stop codons. It may interact directly with the ribosome. The stimulation of RF-1 and RF-2 is significantly reduced by GTP and GDP, but not by GMP. The sequence is that of Peptide chain release factor 3 from Erwinia tasmaniensis (strain DSM 17950 / CFBP 7177 / CIP 109463 / NCPPB 4357 / Et1/99).